We begin with the raw amino-acid sequence, 112 residues long: Cytochrome c6 (112 aa).

An N-terminal signal peptide occupies residues 1–25 (MKKRFISVCAIAIALLVSLTPAALA). Heme c contacts are provided by Cys-39, Cys-42, His-43, and Met-83.

This sequence belongs to the cytochrome c family. PetJ subfamily. As to quaternary structure, monomer. Post-translationally, binds 1 heme c group covalently per subunit.

The protein resides in the cellular thylakoid lumen. In terms of biological role, functions as an electron carrier between membrane-bound cytochrome b6-f and photosystem I in oxygenic photosynthesis. The polypeptide is Cytochrome c6 (petJ) (Thermosynechococcus vestitus (strain NIES-2133 / IAM M-273 / BP-1)).